The following is a 189-amino-acid chain: Haloacid dehalogenase-like hydrolase domain-containing protein 3 (189 aa).

This sequence belongs to the HAD-like hydrolase superfamily.

This Xenopus tropicalis (Western clawed frog) protein is Haloacid dehalogenase-like hydrolase domain-containing protein 3 (hdhd3).